Reading from the N-terminus, the 565-residue chain is NAD-dependent malic enzyme (565 aa).

Tyr-104 serves as the catalytic Proton donor. Arg-157 contacts NAD(+). The active-site Proton acceptor is Lys-175. A divalent metal cation is bound by residues Glu-246, Asp-247, and Asp-270. NAD(+) contacts are provided by Asp-270 and Asn-418.

Belongs to the malic enzymes family. As to quaternary structure, homotetramer. Mg(2+) is required as a cofactor. It depends on Mn(2+) as a cofactor.

It catalyses the reaction (S)-malate + NAD(+) = pyruvate + CO2 + NADH. The enzyme catalyses oxaloacetate + H(+) = pyruvate + CO2. The sequence is that of NAD-dependent malic enzyme from Salmonella dublin (strain CT_02021853).